The sequence spans 531 residues: 2-isopropylmalate synthase (531 aa).

The region spanning Ile-8 to Tyr-284 is the Pyruvate carboxyltransferase domain. Residues Asp-17, His-208, His-210, and Asn-244 each coordinate Mn(2+). A regulatory domain region spans residues Arg-408–Ala-531.

It belongs to the alpha-IPM synthase/homocitrate synthase family. LeuA type 1 subfamily. As to quaternary structure, homodimer. Mn(2+) serves as cofactor.

It localises to the cytoplasm. It catalyses the reaction 3-methyl-2-oxobutanoate + acetyl-CoA + H2O = (2S)-2-isopropylmalate + CoA + H(+). It participates in amino-acid biosynthesis; L-leucine biosynthesis; L-leucine from 3-methyl-2-oxobutanoate: step 1/4. Its function is as follows. Catalyzes the condensation of the acetyl group of acetyl-CoA with 3-methyl-2-oxobutanoate (2-ketoisovalerate) to form 3-carboxy-3-hydroxy-4-methylpentanoate (2-isopropylmalate). This Nostoc sp. (strain PCC 7120 / SAG 25.82 / UTEX 2576) protein is 2-isopropylmalate synthase.